A 451-amino-acid chain; its full sequence is uncharacterized protein (451 aa).

Positions A415–N435 are disordered.

Belongs to the Rv1128c/1148c/1588c/1702c/1945/3466 family.

This is an uncharacterized protein from Mycobacterium tuberculosis (strain ATCC 25618 / H37Rv).